The primary structure comprises 84 residues: Figainin 2 (84 aa).

The signal sequence occupies residues 1–22 (MAFLKKSLFLVLFLGIVSLSVC). Over residues 23-39 (EEEKREGEEKEEKREEE) the composition is skewed to basic and acidic residues. The segment at 23-53 (EEEKREGEEKEEKREEEEGKEENEDGNEEHK) is disordered. Residues 23–54 (EEEKREGEEKEEKREEEEGKEENEDGNEEHKE) constitute a propeptide that is removed on maturation. Residues 40 to 49 (EGKEENEDGN) are compositionally biased toward acidic residues.

Expressed by the skin glands.

It localises to the secreted. Its function is as follows. Antimicrobial peptide that displays antibacterial, antiprotozoal, and antiviral activity. Exhibits antibacterial activity against the Gram-positive bacteria S.epidermidis ATCC 12228 (MIC=4 uM), E.casseliflavus ATCC 700327 (MIC=4 uM), S.aureus ATCC 25923 (MIC=8 uM) and E.faecalis ATCC 29212 (MIC=8 uM), and the Gram-negative bacteria E.coli ATCC 25922 (MIC=8 uM), K.pneumoniae ATCC 13883 (MIC=8 uM), the multi-resistant clinical isolate strain K.pneumoniae carbapanemase (KPC) MR (MIC=16 uM), and P.aeruginosa ATCC 27853 (MIC=32 uM). Displays antiprotozoal activity against the epimastigote form of T.cruzi (IC(50)=6.32 uM). Does not show antimicrobial against the fungi C.albicans ATCC 90028 and C.parapsilosis ATCC 22019. Displays antiviral activity against the human viruses chikungunya (EC(50)=17.9 uM), Dengue serotype 4 (EC(50)=20.8 uM) and Yellow Fever (EC(50)=21.8 uM). Shows moderate cytolytic activity against human erythrocytes (HC(50)=48.9 uM), and activates the oxidative burst in human neutrophils. Also displays anti-proliferative effects against MCF-7 breast cancer cells (IC(50)=15.3 uM) and B16F10 murine melanoma cells (IC(50)=12.8 uM). This chain is Figainin 2, found in Boana raniceps (Chaco tree frog).